Consider the following 67-residue polypeptide: Conotoxin Cal14.2c (67 aa).

The signal sequence occupies residues 1 to 20 (MNVTVMFLVLLLLTMPLTDG). The propeptide occupies 21-48 (FNIRATNGGELFGPVQRDAGNVLDHGFQ).

The protein belongs to the conotoxin L superfamily. Post-translationally, contains 2 disulfide bonds. Expressed by the venom duct.

It is found in the secreted. Functionally, probable neurotoxin with unknown target. Possibly targets ion channels. This Californiconus californicus (California cone) protein is Conotoxin Cal14.2c.